A 431-amino-acid chain; its full sequence is Urokinase-type plasminogen activator (431 aa).

The first 20 residues, 1–20, serve as a signal peptide directing secretion; it reads MRALLARLLLCVLVVSDSKG. One can recognise an EGF-like domain in the interval 27–63; sequence VPSNCDCLNGGTCVSNKYFSNIHWCNCPKKFGGQHCE. Cystine bridges form between Cys-31-Cys-39, Cys-33-Cys-51, Cys-53-Cys-62, Cys-70-Cys-151, Cys-91-Cys-133, and Cys-122-Cys-146. The binds urokinase plasminogen activator surface receptor stretch occupies residues 34 to 57; sequence LNGGTCVSNKYFSNIHWCNCPKKF. Positions 69–151 constitute a Kringle domain; that stretch reads TCYEGNGHFY…LVQECMVHDC (83 aa). The connecting peptide stretch occupies residues 152–178; that stretch reads ADGKKPSSPPEELKFQCGQKTLRPRFK. Ser-158 is subject to Phosphoserine. 6 cysteine pairs are disulfide-bonded: Cys-168-Cys-299, Cys-209-Cys-225, Cys-217-Cys-288, Cys-313-Cys-382, Cys-345-Cys-361, and Cys-372-Cys-400. In terms of domain architecture, Peptidase S1 spans 179–424; sequence IVGGEFTTIE…FLPWIRSHTK (246 aa). Active-site charge relay system residues include His-224 and Asp-275. The N-linked (GlcNAc...) asparagine glycan is linked to Asn-322. Ser-323 is modified (phosphoserine). The active-site Charge relay system is Ser-376.

This sequence belongs to the peptidase S1 family. In terms of assembly, found in high and low molecular mass forms. Each consists of two chains, A and B. The high molecular mass form contains a long chain A which is cleaved to yield a short chain A. Forms heterodimer with SERPINA5. Binds LRP1B; binding is followed by internalization and degradation. Interacts with MRC2. Interacts with PLAUR. In complex with SERPINE1, interacts with PLAUR/uPAR. Interacts with SORL1 and LRP1, either alone or in complex with SERPINE1; these interactions are abolished in the presence of LRPAP1/RAP. The ternary complex composed of PLAUR-PLAU-PAI1 also interacts with SORLA. In terms of processing, phosphorylation of Ser-158 and Ser-323 abolishes proadhesive ability but does not interfere with receptor binding. Produced as an inactive single-chain protein (pro-uPA or sc-uPA), is processed into the active disulfide-linked two-chain form of PLAU/uPA by a proteolytic event mediated, at least, by TMPRSS4.

It localises to the secreted. It catalyses the reaction Specific cleavage of Arg-|-Val bond in plasminogen to form plasmin.. Its activity is regulated as follows. Inhibited by SERPINA5. Inhibited by SERPINE1. Functionally, specifically cleaves the zymogen plasminogen to form the active enzyme plasmin. The chain is Urokinase-type plasminogen activator (PLAU) from Pongo abelii (Sumatran orangutan).